A 46-amino-acid chain; its full sequence is Iota-conotoxin-like r11b (46 aa).

Proline 2 and proline 11 each carry 4-hydroxyproline. 4 cysteine pairs are disulfide-bonded: cysteine 5–cysteine 19, cysteine 12–cysteine 22, cysteine 18–cysteine 27, and cysteine 21–cysteine 38. Proline 29 carries the post-translational modification 4-hydroxyproline. Position 44 is a D-phenylalanine (phenylalanine 44).

Post-translationally, the natural D-Phe form of the peptide is more potent than the synthetic L-Phe form. As to expression, expressed by the venom duct.

The protein resides in the secreted. Its function is as follows. Iota-conotoxins bind to voltage-gated sodium channels (Nav) and act as agonists by shifting the voltage-dependence of activation to more hyperpolarized levels. Produces excitatory symptoms when injected intracranially into mice and is lethal at higher doses. Exposure to frog cutaneous pectoris induces spontaneous and repetitive action potentials. This effect is slowly reversible. Natural peptide (with D-Phe) is active on nerve, but not on muscle. Synthetic peptide (with L-Phe) is not active on both nerve and muscle. The polypeptide is Iota-conotoxin-like r11b (Conus radiatus (Rayed cone)).